The sequence spans 394 residues: Dimethyladenosine transferase 2, mitochondrial (394 aa).

The N-terminal 19 residues, 1–19 (MWVPGAGIPSRLTLSAFTR), are a transit peptide targeting the mitochondrion. S-adenosyl-L-methionine is bound by residues V75, E123, and D149. Residues 326–327 (KR) are DNA-binding.

This sequence belongs to the class I-like SAM-binding methyltransferase superfamily. rRNA adenine N(6)-methyltransferase family. KsgA subfamily. As to quaternary structure, homodimer. Component of the mitochondrial transcription initiation complex, composed at least of TFB2M, TFAM and POLRMT. In this complex TFAM recruits POLRMT to the promoter whereas TFB2M induces structural changes in POLRMT to enable promoter opening and trapping of the DNA non-template strand. Interacts with mitochondrial RNA polymerase POLRMT. Interacts with TFAM.

It is found in the mitochondrion. The catalysed reaction is adenosine in rRNA + S-adenosyl-L-methionine = N(6)-methyladenosine in rRNA + S-adenosyl-L-homocysteine + H(+). Its function is as follows. S-adenosyl-L-methionine-dependent rRNA methyltransferase which may methylate two specific adjacent adenosines in the loop of a conserved hairpin near the 3'-end of 12S mitochondrial rRNA. Component of the mitochondrial transcription initiation complex, composed at least of TFB2M, TFAM and POLRMT that is required for basal transcription of mitochondrial DNA. In this complex TFAM recruits POLRMT to a specific promoter whereas TFB2M induces structural changes in POLRMT to enable promoter opening and trapping of the DNA non-template strand. Stimulates transcription independently of the methyltransferase activity. The sequence is that of Dimethyladenosine transferase 2, mitochondrial from Bos taurus (Bovine).